Reading from the N-terminus, the 320-residue chain is UPF0053 protein in cps region (320 aa).

A helical transmembrane segment spans residues 4–24; that stretch reads CLSFLLMIGFSLIAEGFSFII. 2 consecutive CBS domains span residues 121–183 and 186–244; these read MTSR…PLDL and LVRQ…PNEV.

This sequence belongs to the UPF0053 family.

Its subcellular location is the cell membrane. This Klebsiella pneumoniae protein is UPF0053 protein in cps region.